A 1768-amino-acid polypeptide reads, in one-letter code: Callose synthase 11 (1768 aa).

Residues 1–308 (MRRQRPSVAT…WNVYRSFDRL (308 aa)) are Cytoplasmic-facing. Residues 309–329 (WILLLLYLQAAIIVATSDVKF) traverse the membrane as a helical segment. The Extracellular portion of the chain corresponds to 330-335 (PWQDRD). A helical transmembrane segment spans residues 336 to 356 (VEVALLTVFISWAGLRLLQSV). At 357–370 (LDASTQYSLVSRET) the chain is on the cytoplasmic side. Residues 371–391 (YWLFIRLTLKFVVAVAWTVLF) form a helical membrane-spanning segment. At 392 to 421 (SVFYARIWSQKNKDGVWSRAANERVVTFLK) the chain is on the extracellular side. Residues 422–442 (VVFVYVIPELLALVLFIVPCI) form a helical membrane-spanning segment. At 443–480 (RNWVEELNLGVVYFLTWWFYSKTFVGRGMREGLVDNVK) the chain is on the cytoplasmic side. Residues 481-501 (YTLFWIIVLATKFIFSYFLQI) form a helical membrane-spanning segment. Residues 502–530 (RPLIAPTRALLNLKDATYNWHEFFGSTHR) are Extracellular-facing. The helical transmembrane segment at 531-551 (IAVGMLWLPVILVYLMDLQIW) threads the bilayer. Over 552-1341 (YSIYSSLVGA…FFRMLSFFYT (790 aa)) the chain is Cytoplasmic. The chain crosses the membrane as a helical span at residues 1342–1362 (TVGYYFNTMLIVFTVYAFLWG). Residues 1363-1386 (RLYLALSGVEKIAKDRSSSNEALG) are Extracellular-facing. A helical membrane pass occupies residues 1387 to 1407 (AILNQQFIIQLGLFTALPMIL). Topologically, residues 1408–1413 (ENSLER) are cytoplasmic. Residues 1414–1434 (GFLPAVWDFITMQLQLASFFY) traverse the membrane as a helical segment. Topologically, residues 1435 to 1481 (TFSMGTRTHYFGRTILHGGAKYRATGRGFVVEHKKFAENYRLYARTH) are extracellular. A helical membrane pass occupies residues 1482–1502 (FIKAIELAIILLVYAAYSPLA). Residues 1503–1508 (KSSFVY) lie on the Cytoplasmic side of the membrane. The chain crosses the membrane as a helical span at residues 1509 to 1529 (ILMTISSWFLITSWIISPFLF). The Extracellular segment spans residues 1530-1583 (NPSGFDWLKTVNDFDDFIAWLWSRGGLFTKADQSWFTWWNEEQEHLKTTGVWGK). The helical transmembrane segment at 1584–1604 (LLEIILDLRFFFFQYSIVYHL) threads the bilayer. Over 1605-1612 (RIAENRTS) the chain is Cytoplasmic. A helical membrane pass occupies residues 1613-1633 (IGVYLISWGCIIGIVAIYITT). At 1634-1649 (IYAQKRYSVKEHIKYR) the chain is on the extracellular side. Residues 1650-1670 (FIQFLVILLTVLVVVMMLQFT) form a helical membrane-spanning segment. Residues 1671 to 1673 (KLT) are Cytoplasmic-facing. A helical membrane pass occupies residues 1674 to 1694 (VVDLLISLLAFVPTGWGLISI). Residues 1695–1719 (AQVLKPFLLSTVVWDTVISVARFYD) lie on the Extracellular side of the membrane. The chain crosses the membrane as a helical span at residues 1720-1740 (LFFGLIVMAPVALLSWLPGFQ). The Cytoplasmic segment spans residues 1741 to 1768 (NMQTRILFNEAFSRGLQISIILAGKKST).

It belongs to the glycosyltransferase 48 family. In terms of tissue distribution, ubiquitous.

Its subcellular location is the cell membrane. It carries out the reaction [(1-&gt;3)-beta-D-glucosyl](n) + UDP-alpha-D-glucose = [(1-&gt;3)-beta-D-glucosyl](n+1) + UDP + H(+). Required the formation of the callose wall separating the tetraspores (interstitial wall), but not for the callose wall surrounding the pollen mother cells (peripheral wall). Functionally redudant to CALS12 (GSL5). During plant growth and development, callose is found as a transitory component of the cell plate in dividing cells, is a major component of pollen mother cell walls and pollen tubes, and is found as a structural component of plasmodesmatal canals. In Arabidopsis thaliana (Mouse-ear cress), this protein is Callose synthase 11 (CALS11).